The chain runs to 736 residues: 1,4-alpha-glucan branching enzyme GlgB (736 aa).

Asp415 acts as the Nucleophile in catalysis. Residue Glu468 is the Proton donor of the active site.

Belongs to the glycosyl hydrolase 13 family. GlgB subfamily. As to quaternary structure, monomer.

It catalyses the reaction Transfers a segment of a (1-&gt;4)-alpha-D-glucan chain to a primary hydroxy group in a similar glucan chain.. It participates in glycan biosynthesis; glycogen biosynthesis. Its function is as follows. Catalyzes the formation of the alpha-1,6-glucosidic linkages in glycogen by scission of a 1,4-alpha-linked oligosaccharide from growing alpha-1,4-glucan chains and the subsequent attachment of the oligosaccharide to the alpha-1,6 position. The protein is 1,4-alpha-glucan branching enzyme GlgB of Rhodopirellula baltica (strain DSM 10527 / NCIMB 13988 / SH1).